The chain runs to 127 residues: DNA-directed RNA polymerase subunit omega (127 aa).

This sequence belongs to the RNA polymerase subunit omega family. As to quaternary structure, the RNAP catalytic core consists of 2 alpha, 1 beta, 1 beta' and 1 omega subunit. When a sigma factor is associated with the core the holoenzyme is formed, which can initiate transcription.

The enzyme catalyses RNA(n) + a ribonucleoside 5'-triphosphate = RNA(n+1) + diphosphate. Promotes RNA polymerase assembly. Latches the N- and C-terminal regions of the beta' subunit thereby facilitating its interaction with the beta and alpha subunits. In Rickettsia peacockii (strain Rustic), this protein is DNA-directed RNA polymerase subunit omega.